A 103-amino-acid polypeptide reads, in one-letter code: Pyrimidine/purine nucleoside phosphorylase (103 aa).

It belongs to the nucleoside phosphorylase PpnP family.

It catalyses the reaction a purine D-ribonucleoside + phosphate = a purine nucleobase + alpha-D-ribose 1-phosphate. The enzyme catalyses adenosine + phosphate = alpha-D-ribose 1-phosphate + adenine. The catalysed reaction is cytidine + phosphate = cytosine + alpha-D-ribose 1-phosphate. It carries out the reaction guanosine + phosphate = alpha-D-ribose 1-phosphate + guanine. It catalyses the reaction inosine + phosphate = alpha-D-ribose 1-phosphate + hypoxanthine. The enzyme catalyses thymidine + phosphate = 2-deoxy-alpha-D-ribose 1-phosphate + thymine. The catalysed reaction is uridine + phosphate = alpha-D-ribose 1-phosphate + uracil. It carries out the reaction xanthosine + phosphate = alpha-D-ribose 1-phosphate + xanthine. In terms of biological role, catalyzes the phosphorolysis of diverse nucleosides, yielding D-ribose 1-phosphate and the respective free bases. Can use uridine, adenosine, guanosine, cytidine, thymidine, inosine and xanthosine as substrates. Also catalyzes the reverse reactions. The sequence is that of Pyrimidine/purine nucleoside phosphorylase from Sulfurimonas denitrificans (strain ATCC 33889 / DSM 1251) (Thiomicrospira denitrificans (strain ATCC 33889 / DSM 1251)).